A 528-amino-acid chain; its full sequence is Na(+)/H(+) antiporter NhaB (528 aa).

The Cytoplasmic portion of the chain corresponds to 1 to 23 (MPISLGNAFIKNFLGKAPDWYKV). Residues 24-46 (AIIAFLIINPIVFFLINPFVAGW) form a helical membrane-spanning segment. Residues 47–95 (LLVAEFIFTLAMALKCYPLQPGGLLAIEAIAIGMTSPAQVKHELVANIE) lie on the Periplasmic side of the membrane. Residues 96–118 (VLLLLVFMVAGIYFMKHLLLFIF) form a helical membrane-spanning segment. The Cytoplasmic segment spans residues 119–129 (TKILLGIRSKT). The chain crosses the membrane as a helical span at residues 130 to 163 (LLSLAFCFAAAFLSAFLDALTVIAVVISVAIGFY). Residues 164–239 (SIYHKVASGN…ADQAGWLFGE (76 aa)) are Periplasmic-facing. Residues 240–262 (FLIRMSPVTLPVFFCGLITCALV) form a helical membrane-spanning segment. The Cytoplasmic portion of the chain corresponds to 263-297 (EKLKVFGYGAKLPNNVRQILVDFDNEERKTRTNQD). Residues 298 to 317 (VAKLWVQGLIAVWLIVALAL) traverse the membrane as a helical segment. Topologically, residues 318-320 (HLA) are periplasmic. A helical membrane pass occupies residues 321–340 (AVGLIGLSVIILATAFTGVI). Over 341–352 (EEHSMGKAFEEA) the chain is Cytoplasmic. The chain crosses the membrane as a helical span at residues 353–375 (LPFTALLAVFFSIVAVIIDQELF). Topologically, residues 376 to 389 (KPVIDAVLAVEDKG) are periplasmic. Residues 390–412 (TQLALFYVANGLLSMVSDNVFVG) traverse the membrane as a helical segment. Residues 413 to 477 (TVYINEVKTA…PLIRLSYGRM (65 aa)) lie on the Cytoplasmic side of the membrane. Residues 478–500 (VIMALPYTIVLAIVGLMGIMFFL) traverse the membrane as a helical segment. Residues 501 to 528 (EPATASFYDAGWILPHSGDLTPVVSGGH) are Periplasmic-facing.

It belongs to the NhaB Na(+)/H(+) (TC 2.A.34) antiporter family.

It is found in the cell inner membrane. It catalyses the reaction 2 Na(+)(in) + 3 H(+)(out) = 2 Na(+)(out) + 3 H(+)(in). Functionally, na(+)/H(+) antiporter that extrudes sodium in exchange for external protons. The sequence is that of Na(+)/H(+) antiporter NhaB from Vibrio alginolyticus.